The chain runs to 388 residues: MFDEIRPTRVEVNLDSIVHNFREIKRVVGDRVKVMGVVKANAYGHGAYHVAKALVENGVDYLAVATVEEALELRSYGITAPVLILGYTPLSQAGEAVEKDVTFTAFDLKYVKELGEIASRKGKKAKIHVKIDTGMGRIGYTDFDLAEREIEEMSKLEGIELEGIFSHFATSDEKDKDYAREQFERFADMLKRLEKRGVNITLKHIANSGAITDLNYAYLDMVRPGITLYGSYPSNDVNKILDLRPAMNFKTKIVYIKEVPENTSISYGRTFITKRPSKIATLPIGYADGLNRLLSNNHEVLVRGKYVPIVGRVCMDQTMIDVTEVEGVEVGDEVVIFGEQEGKRITADDIAKKLRTIPHEVYCGISRRVPRIYIYRGEVFDVKNYLKI.

The active-site Proton acceptor; specific for D-alanine is the K39. N6-(pyridoxal phosphate)lysine is present on K39. R137 contributes to the substrate binding site. Y267 (proton acceptor; specific for L-alanine) is an active-site residue. M315 contributes to the substrate binding site.

It belongs to the alanine racemase family. It depends on pyridoxal 5'-phosphate as a cofactor.

The catalysed reaction is L-alanine = D-alanine. Its pathway is amino-acid biosynthesis; D-alanine biosynthesis; D-alanine from L-alanine: step 1/1. Catalyzes the interconversion of L-alanine and D-alanine. May also act on other amino acids. This chain is Alanine racemase 2 (alr2), found in Caldanaerobacter subterraneus subsp. tengcongensis (strain DSM 15242 / JCM 11007 / NBRC 100824 / MB4) (Thermoanaerobacter tengcongensis).